The primary structure comprises 464 residues: Kynureninase (464 aa).

M1 is subject to N-acetylmethionine. Residues L137, T138, 165-168 (FPSD), S221, D250, H253, and Y275 contribute to the pyridoxal 5'-phosphate site. K276 bears the N6-(pyridoxal phosphate)lysine mark. Residues W305 and N333 each coordinate pyridoxal 5'-phosphate.

Belongs to the kynureninase family. Homodimer. Requires pyridoxal 5'-phosphate as cofactor. High levels in liver and kidney. Also detected in heart, retina, ovary. Lung, testis and brain.

The protein resides in the cytoplasm. It localises to the cytosol. The catalysed reaction is L-kynurenine + H2O = anthranilate + L-alanine + H(+). The enzyme catalyses 3-hydroxy-L-kynurenine + H2O = 3-hydroxyanthranilate + L-alanine + H(+). The protein operates within amino-acid degradation; L-kynurenine degradation; L-alanine and anthranilate from L-kynurenine: step 1/1. It participates in cofactor biosynthesis; NAD(+) biosynthesis; quinolinate from L-kynurenine: step 2/3. Inhibited by o-methylbenzoylalanine (OMBA). Catalyzes the cleavage of L-kynurenine (L-Kyn) and L-3-hydroxykynurenine (L-3OHKyn) into anthranilic acid (AA) and 3-hydroxyanthranilic acid (3-OHAA), respectively. Has a preference for the L-3-hydroxy form. Also has cysteine-conjugate-beta-lyase activity. In Rattus norvegicus (Rat), this protein is Kynureninase (Kynu).